Reading from the N-terminus, the 100-residue chain is Integration host factor subunit alpha (100 aa).

Belongs to the bacterial histone-like protein family. Heterodimer of an alpha and a beta chain.

Its function is as follows. This protein is one of the two subunits of integration host factor, a specific DNA-binding protein that functions in genetic recombination as well as in transcriptional and translational control. The polypeptide is Integration host factor subunit alpha (Buchnera aphidicola subsp. Schizaphis graminum (strain Sg)).